We begin with the raw amino-acid sequence, 234 residues long: Glutathione S-transferase sirG (234 aa).

Positions leucine 15–glycine 99 constitute a GST N-terminal domain. In terms of domain architecture, GST C-terminal spans aspartate 105 to serine 230.

The protein belongs to the GST superfamily.

The catalysed reaction is RX + glutathione = an S-substituted glutathione + a halide anion + H(+). Its pathway is mycotoxin biosynthesis. In terms of biological role, glutathione S-transferase; part of the gene cluster that mediates the biosynthesis of sirodesmin PL, an epipolythiodioxopiperazine (ETP) characterized by a disulfide bridged cyclic dipeptide and that acts as a phytotoxin which is involved in the blackleg didease of canola. SirD catalyzes the O-prenylation of L-tyrosine (L-Tyr) in the presence of dimethylallyl diphosphate (DMAPP) to yield 4-O-dimethylallyl-L-Tyr, and therefore represents probably the first pathway-specific enzyme in the biosynthesis of sirodesmin PL. 4-O-dimethylallyl-L-Tyr, then undergoes condensation with L-Ser in a reaction catalyzed by the non-ribosomal peptide synthase sirP to form the diketopiperazine (DKP) backbone. Further bishydroxylation of the DKP performed by the cytochrome P450 monooxygenase sirC leads to the production of the intermediate phomamide. This step is essential to form the reactive thiol group required for toxicity of sirodesmin PL. The next steps of sirodesmin biosynthesis are not well understood yet, but some predictions could be made from intermediate compounds identification. Phomamide is converted into phomalizarine via oxidation, probably by sirT. Further oxidation, methylation (by sirM or sirN) and reduction steps convert phomalizarine to deacetyl sirodesmin. Finally, acetyltransferase sirH probably acetylates deacetyl sirodesmin to produce sirodesmin PL. This Leptosphaeria maculans (Blackleg fungus) protein is Glutathione S-transferase sirG.